Reading from the N-terminus, the 203-residue chain is Holliday junction branch migration complex subunit RuvA (203 aa).

A domain I region spans residues 1–65 (MIAYIHGKLL…EDAFDLYGFP (65 aa)). A domain II region spans residues 66–144 (CFDDREVFRT…TLKSATVRSG (79 aa)). Residues 145 to 155 (ACPVEGDRSEF) form a flexible linker region. Residues 155-203 (FLDALSGLRNLGYGDDEVRDFLKDIFDEEPDLDAGGAIRVALKKISQNK) are domain III.

It belongs to the RuvA family. In terms of assembly, homotetramer. Forms an RuvA(8)-RuvB(12)-Holliday junction (HJ) complex. HJ DNA is sandwiched between 2 RuvA tetramers; dsDNA enters through RuvA and exits via RuvB. An RuvB hexamer assembles on each DNA strand where it exits the tetramer. Each RuvB hexamer is contacted by two RuvA subunits (via domain III) on 2 adjacent RuvB subunits; this complex drives branch migration. In the full resolvosome a probable DNA-RuvA(4)-RuvB(12)-RuvC(2) complex forms which resolves the HJ.

The protein localises to the cytoplasm. In terms of biological role, the RuvA-RuvB-RuvC complex processes Holliday junction (HJ) DNA during genetic recombination and DNA repair, while the RuvA-RuvB complex plays an important role in the rescue of blocked DNA replication forks via replication fork reversal (RFR). RuvA specifically binds to HJ cruciform DNA, conferring on it an open structure. The RuvB hexamer acts as an ATP-dependent pump, pulling dsDNA into and through the RuvAB complex. HJ branch migration allows RuvC to scan DNA until it finds its consensus sequence, where it cleaves and resolves the cruciform DNA. The sequence is that of Holliday junction branch migration complex subunit RuvA from Maridesulfovibrio salexigens (strain ATCC 14822 / DSM 2638 / NCIMB 8403 / VKM B-1763) (Desulfovibrio salexigens).